A 175-amino-acid polypeptide reads, in one-letter code: Inorganic pyrophosphatase (175 aa).

3 residues coordinate substrate: K30, R44, and Y56. Mg(2+) is bound by residues D66, D71, and D103. Residue Y142 participates in substrate binding.

This sequence belongs to the PPase family. As to quaternary structure, homohexamer. Requires Mg(2+) as cofactor.

The protein resides in the cytoplasm. The catalysed reaction is diphosphate + H2O = 2 phosphate + H(+). Catalyzes the hydrolysis of inorganic pyrophosphate (PPi) forming two phosphate ions. In Yersinia pestis, this protein is Inorganic pyrophosphatase.